Consider the following 572-residue polypeptide: MRTSQYLLSTQKETPADAEVISHQLMLRAGMIRKLASGLYTWLPTGVRVLKKVENIVREEMNNAGAIEVSMPVVQPADLWQESGRWEQYGPELLRFVDRGERPFVLGPTHEEVITDLIRGEINSYKQLPLNFFQIQTKFRDEVRPRFGVMRAREFLMKDAYSFHTTQESLQETYDAMYTAYSKIFSRMDLNFRAVLADTGSIGGSASHEFQVLAESGEDDIVFSTGSDYAANIEFAEALAPTEPRAPATEELRIVDTPNAKTIAELVEQFKLPIEKTVKTLLVHAHEESGHKLVALLVRGDHDLNEIKAEKLPQVAKPLTFASEEEIRAAIGAGPGSLGPVNLSLPVIADHSVAVMSDFGAGANIDGKHYFGINWERDLALPLVADLRNVVEGDISPDGKGTLQIKRGIEVGHIFQLGTKYSEVMKATVQGEDGRNQVMTMGCYGIGVSRVVAAAIEQNHDDRGIIWPDAIAPFQVAILPMNMHKSFRVKELAEELYTTLRSHGIDVILDDRKERPGVMFADMELIGVPHNIVIGDRNLDSEEVEYKNRRVGEKQMIKTSEIVEFLLSQIKR.

The protein belongs to the class-II aminoacyl-tRNA synthetase family. ProS type 1 subfamily. Homodimer.

The protein resides in the cytoplasm. It carries out the reaction tRNA(Pro) + L-proline + ATP = L-prolyl-tRNA(Pro) + AMP + diphosphate. In terms of biological role, catalyzes the attachment of proline to tRNA(Pro) in a two-step reaction: proline is first activated by ATP to form Pro-AMP and then transferred to the acceptor end of tRNA(Pro). As ProRS can inadvertently accommodate and process non-cognate amino acids such as alanine and cysteine, to avoid such errors it has two additional distinct editing activities against alanine. One activity is designated as 'pretransfer' editing and involves the tRNA(Pro)-independent hydrolysis of activated Ala-AMP. The other activity is designated 'posttransfer' editing and involves deacylation of mischarged Ala-tRNA(Pro). The misacylated Cys-tRNA(Pro) is not edited by ProRS. The polypeptide is Proline--tRNA ligase (Yersinia pestis bv. Antiqua (strain Antiqua)).